A 785-amino-acid chain; its full sequence is Sexual differentiation process protein isp4 (785 aa).

The tract at residues 1–28 (MIGSINESPIEEHMNDSPSTKEKADSVD) is disordered. Residues 10-26 (IEEHMNDSPSTKEKADS) are compositionally biased toward basic and acidic residues. The next 16 helical transmembrane spans lie at 94-114 (MWTI…FFSL), 121-141 (LSVL…DLIF), 167-187 (LIVV…IILA), 196-216 (FGFG…YGLA), 264-284 (FFLY…YIFQ), 339-359 (LMNI…ALNF), 413-433 (ALAF…VILY), 461-481 (VPFY…MGTI), 490-510 (WWVI…IGIV), 512-532 (AITN…GYMY), 537-557 (LAMM…LAFA), 572-592 (IMFY…IGVL), 611-631 (YTCP…VIGP), 642-662 (TGLQ…WALW), 683-703 (GYIP…GLFF), and 732-752 (LSVI…PDWW).

This sequence belongs to the oligopeptide OPT transporter family.

It localises to the endoplasmic reticulum membrane. This Schizosaccharomyces pombe (strain 972 / ATCC 24843) (Fission yeast) protein is Sexual differentiation process protein isp4 (isp4).